Consider the following 240-residue polypeptide: Fibronectin type III domain-containing protein 5 (240 aa).

Over residues 1-10 the composition is skewed to gly residues; sequence MQAARGGAGR. Residues 1-33 form a disordered region; sequence MQAARGGAGRPGREGRGLERECERSPGPGVAMP. Residues 11–24 are compositionally biased toward basic and acidic residues; sequence PGREGRGLERECER. One can recognise a Fibronectin type-III domain in the interval 64-155; that stretch reads APVNVTVRHL…EPVLFKTPRE (92 aa). Asn-67 and Asn-112 each carry an N-linked (GlcNAc...) asparagine glycan. Residues 181-201 traverse the membrane as a helical segment; it reads GEVLIIVVVLFMWAGVIALFC. A compositionally biased stretch (basic and acidic residues) spans 210 to 221; that stretch reads NEPNNNKEKTKS. Positions 210–240 are disordered; it reads NEPNNNKEKTKSASETSTPEHQGGGLLRSKI. Positions 231 to 240 are enriched in gly residues; the sequence is QGGGLLRSKI. The Microbody targeting signal motif lies at 238–240; the sequence is SKI.

In terms of assembly, dimer; may exist in other oligomeric forms. Post-translationally, the extracellular domain is cleaved and released from the cell membrane. N-Glycosylated. As to expression, in adult, it is highly expressed in skeletal muscle, heart and brain.

Its subcellular location is the cell membrane. It is found in the peroxisome membrane. The protein localises to the secreted. Mediates beneficial effects of muscular exercise. Induces browning of white adipose tissue by stimulating UCP1 expression, at least in part, via the nuclear receptor PPARA. In Mus musculus (Mouse), this protein is Fibronectin type III domain-containing protein 5 (Fndc5).